A 46-amino-acid chain; its full sequence is Photosystem II reaction center protein K (46 aa).

A propeptide spanning residues 1 to 9 (MESILMIFA) is cleaved from the precursor. A helical transmembrane segment spans residues 25–45 (LPVIPVLFLLLAFVWQAAVSF).

Belongs to the PsbK family. In terms of assembly, PSII is composed of 1 copy each of membrane proteins PsbA, PsbB, PsbC, PsbD, PsbE, PsbF, PsbH, PsbI, PsbJ, PsbK, PsbL, PsbM, PsbT, PsbX, PsbY, PsbZ, Psb30/Ycf12, at least 3 peripheral proteins of the oxygen-evolving complex and a large number of cofactors. It forms dimeric complexes.

It localises to the plastid. The protein localises to the chloroplast thylakoid membrane. In terms of biological role, one of the components of the core complex of photosystem II (PSII). PSII is a light-driven water:plastoquinone oxidoreductase that uses light energy to abstract electrons from H(2)O, generating O(2) and a proton gradient subsequently used for ATP formation. It consists of a core antenna complex that captures photons, and an electron transfer chain that converts photonic excitation into a charge separation. The chain is Photosystem II reaction center protein K from Stigeoclonium helveticum (Green alga).